Reading from the N-terminus, the 155-residue chain is Myelin basic protein (155 aa).

The segment at 1-72 (MASATTSDHA…HQGARRQTDD (72 aa)) is disordered. Residue alanine 2 is modified to N-acetylalanine; in forms C1, C2, C3 and C8. Deamidated glutamine; in forms C1, C2 and C3 is present on glutamine 12. Over residues 37–49 (GSRKVPEKGKEPA) the composition is skewed to basic and acidic residues. Residues serine 73 and serine 84 each carry the phosphoserine; in forms C1, C2 and C3 modification. Residues 113–155 (RAHYGAAGSSKSKDGFRGRRDGSGTLSSFFKMGKKGEGSPARR) are disordered. A phosphoserine; in forms C1 and C3 mark is found at serine 121 and serine 122. Residues 123 to 134 (KSKDGFRGRRDG) are compositionally biased toward basic and acidic residues. Phosphoserine; in forms C1, C2 and C3 occurs at positions 135, 139, and 140.

This sequence belongs to the myelin basic protein family. Several charge isomers are produced as a result of optional post-translational modifications, such as phosphorylation, deamidation and citrullination. Dogfish MBP contains four major components designated as C1, C2, C3 and C8. C1 and C3, but not C2 are phosphorylated at either Ser-121 or Ser-122; C2 is phosphorylated at 2 or 3 sites among Ser-135, Ser-139 and Ser-140. Hydroxyproline and citrulline are present but were not identified in either C1, C2 or C3, which suggests their presence in C8.

Its subcellular location is the myelin membrane. Its function is as follows. This protein may function to maintain proper structure of myelin. In Squalus acanthias (Spiny dogfish), this protein is Myelin basic protein (MBP).